Reading from the N-terminus, the 155-residue chain is 3-hydroxyacyl-[acyl-carrier-protein] dehydratase FabZ (155 aa).

His-61 is a catalytic residue.

It belongs to the thioester dehydratase family. FabZ subfamily.

The protein localises to the cytoplasm. It carries out the reaction a (3R)-hydroxyacyl-[ACP] = a (2E)-enoyl-[ACP] + H2O. Its function is as follows. Involved in unsaturated fatty acids biosynthesis. Catalyzes the dehydration of short chain beta-hydroxyacyl-ACPs and long chain saturated and unsaturated beta-hydroxyacyl-ACPs. In Synechococcus sp. (strain ATCC 27144 / PCC 6301 / SAUG 1402/1) (Anacystis nidulans), this protein is 3-hydroxyacyl-[acyl-carrier-protein] dehydratase FabZ.